The sequence spans 157 residues: 6,7-dimethyl-8-ribityllumazine synthase (157 aa).

5-amino-6-(D-ribitylamino)uracil contacts are provided by residues Phe25, 59 to 61 (AME), and 83 to 85 (AII). (2S)-2-hydroxy-3-oxobutyl phosphate is bound at residue 88–89 (ST). His91 acts as the Proton donor in catalysis. Phe116 contributes to the 5-amino-6-(D-ribitylamino)uracil binding site. Residue Arg130 coordinates (2S)-2-hydroxy-3-oxobutyl phosphate.

This sequence belongs to the DMRL synthase family.

It catalyses the reaction (2S)-2-hydroxy-3-oxobutyl phosphate + 5-amino-6-(D-ribitylamino)uracil = 6,7-dimethyl-8-(1-D-ribityl)lumazine + phosphate + 2 H2O + H(+). The protein operates within cofactor biosynthesis; riboflavin biosynthesis; riboflavin from 2-hydroxy-3-oxobutyl phosphate and 5-amino-6-(D-ribitylamino)uracil: step 1/2. Catalyzes the formation of 6,7-dimethyl-8-ribityllumazine by condensation of 5-amino-6-(D-ribitylamino)uracil with 3,4-dihydroxy-2-butanone 4-phosphate. This is the penultimate step in the biosynthesis of riboflavin. The polypeptide is 6,7-dimethyl-8-ribityllumazine synthase (Lawsonia intracellularis (strain PHE/MN1-00)).